The sequence spans 159 residues: Large ribosomal subunit protein uL10 (159 aa).

The protein belongs to the universal ribosomal protein uL10 family. Part of the ribosomal stalk of the 50S ribosomal subunit. The N-terminus interacts with L11 and the large rRNA to form the base of the stalk. The C-terminus forms an elongated spine to which L12 dimers bind in a sequential fashion forming a multimeric L10(L12)X complex.

Its function is as follows. Forms part of the ribosomal stalk, playing a central role in the interaction of the ribosome with GTP-bound translation factors. The sequence is that of Large ribosomal subunit protein uL10 from Nautilia profundicola (strain ATCC BAA-1463 / DSM 18972 / AmH).